The sequence spans 247 residues: Carboxy-S-adenosyl-L-methionine synthase (247 aa).

S-adenosyl-L-methionine is bound by residues tyrosine 39, 64 to 66 (GCS), 89 to 90 (DN), 117 to 118 (DI), asparagine 132, and arginine 199.

The protein belongs to the class I-like SAM-binding methyltransferase superfamily. Cx-SAM synthase family. Homodimer.

It carries out the reaction prephenate + S-adenosyl-L-methionine = carboxy-S-adenosyl-L-methionine + 3-phenylpyruvate + H2O. Its function is as follows. Catalyzes the conversion of S-adenosyl-L-methionine (SAM) to carboxy-S-adenosyl-L-methionine (Cx-SAM). The protein is Carboxy-S-adenosyl-L-methionine synthase of Klebsiella pneumoniae (strain 342).